Consider the following 700-residue polypeptide: Transketolase (700 aa).

T2 bears the N-acetylthreonine mark. H45 contacts substrate. Thiamine diphosphate contacts are provided by residues T48, H85, 133–135 (GPL), and L135. A Mg(2+)-binding site is contributed by D177. 2 residues coordinate thiamine diphosphate: G178 and N207. Positions 207 and 209 each coordinate Mg(2+). Positions 283, 378, and 405 each coordinate substrate. H283 is a binding site for thiamine diphosphate. E441 acts as the Proton donor in catalysis. F467 is a binding site for thiamine diphosphate. Residues H491, D499, and R552 each contribute to the substrate site.

It belongs to the transketolase family. As to quaternary structure, homodimer. Mg(2+) serves as cofactor. Requires Ca(2+) as cofactor. The cofactor is Mn(2+). It depends on Co(2+) as a cofactor. Thiamine diphosphate is required as a cofactor.

The enzyme catalyses D-sedoheptulose 7-phosphate + D-glyceraldehyde 3-phosphate = aldehydo-D-ribose 5-phosphate + D-xylulose 5-phosphate. Catalyzes the reversible transfer of a two-carbon ketol group from sedoheptulose-7-phosphate to glyceraldehyde-3-phosphate, producing xylulose-5-phosphate and ribose-5-phosphate. Catalyzes the transfer of a two-carbon ketol group from a ketose donor to an aldose acceptor, via a covalent intermediate with the cofactor thiamine pyrophosphate. In Mycobacterium tuberculosis (strain ATCC 25618 / H37Rv), this protein is Transketolase (tkt).